The primary structure comprises 473 residues: Putative amidase AmiC (473 aa).

Active-site charge relay system residues include Lys82 and Ser157. Ser181 serves as the catalytic Acyl-ester intermediate.

The protein belongs to the amidase family.

The catalysed reaction is a monocarboxylic acid amide + H2O = a monocarboxylate + NH4(+). The protein is Putative amidase AmiC (amiC) of Mycobacterium bovis (strain ATCC BAA-935 / AF2122/97).